The primary structure comprises 303 residues: Histone deacetylase HDT2 (303 aa).

Residues 100–112 (EMDLDSEDEEEEL) show a composition bias toward acidic residues. A disordered region spans residues 100–282 (EMDLDSEDEE…SGGSVPCKSC (183 aa)). Positions 119–133 (ENGKADGKEEQKNQE) are enriched in basic and acidic residues. Residues 154–203 (DSDDSDEDESDDSDEDDSDDSDEGEGLSPDEGDDDSSDEDDTSDDDEEET) are compositionally biased toward acidic residues. Over residues 204-217 (PTPKKPEAGKKRGA) the composition is skewed to basic and acidic residues. The C2H2-type zinc finger occupies 277–300 (VPCKSCSKTFNSEMALQAHSKAKH).

This sequence belongs to the histone deacetylase HD2 family. In terms of assembly, multimer. Possibly forms a homotrimer with HDT1 and/or HDT3.

It localises to the nucleus. The protein localises to the nucleolus. Its function is as follows. Mediates the deacetylation of lysine residues on the N-terminal part of the core histones (H2A, H2B, H3 and H4). Histone deacetylation gives a tag for epigenetic repression and plays an important role in transcriptional regulation, cell cycle progression and developmental events. This chain is Histone deacetylase HDT2 (HDT2), found in Zea mays (Maize).